The following is a 416-amino-acid chain: S-adenosylmethionine synthase (416 aa).

His14 lines the ATP pocket. Asp16 lines the Mg(2+) pocket. Residue Glu42 coordinates K(+). Residues Glu55 and Gln98 each coordinate L-methionine. A flexible loop region spans residues Gln98–Arg108. ATP-binding positions include Asp164–Lys166, Lys240–Phe241, Asp249, Arg255–Lys256, Ala272, and Lys276. Asp249 provides a ligand contact to L-methionine. Lys280 serves as a coordination point for L-methionine.

Belongs to the AdoMet synthase family. As to quaternary structure, homotetramer; dimer of dimers. Mg(2+) serves as cofactor. K(+) is required as a cofactor.

Its subcellular location is the cytoplasm. The catalysed reaction is L-methionine + ATP + H2O = S-adenosyl-L-methionine + phosphate + diphosphate. It functions in the pathway amino-acid biosynthesis; S-adenosyl-L-methionine biosynthesis; S-adenosyl-L-methionine from L-methionine: step 1/1. Its function is as follows. Catalyzes the formation of S-adenosylmethionine (AdoMet) from methionine and ATP. The overall synthetic reaction is composed of two sequential steps, AdoMet formation and the subsequent tripolyphosphate hydrolysis which occurs prior to release of AdoMet from the enzyme. In Flavobacterium johnsoniae (strain ATCC 17061 / DSM 2064 / JCM 8514 / BCRC 14874 / CCUG 350202 / NBRC 14942 / NCIMB 11054 / UW101) (Cytophaga johnsonae), this protein is S-adenosylmethionine synthase.